The sequence spans 314 residues: tRNA dimethylallyltransferase 1 (314 aa).

8–15 serves as a coordination point for ATP; sequence GPTGSGKS. Residue 10 to 15 coordinates substrate; the sequence is TGSGKS.

The protein belongs to the IPP transferase family. As to quaternary structure, monomer. Mg(2+) serves as cofactor.

It catalyses the reaction adenosine(37) in tRNA + dimethylallyl diphosphate = N(6)-dimethylallyladenosine(37) in tRNA + diphosphate. Catalyzes the transfer of a dimethylallyl group onto the adenine at position 37 in tRNAs that read codons beginning with uridine, leading to the formation of N6-(dimethylallyl)adenosine (i(6)A). In Mycobacterium ulcerans (strain Agy99), this protein is tRNA dimethylallyltransferase 1.